The chain runs to 667 residues: Single-minded homolog 2 (667 aa).

The bHLH domain occupies 1–53 (MKEKSKNAAKTRREKENGEFYELAKLLPLPSAITSQLDKASIIRLTTSYLKMR). 2 PAS domains span residues 77–149 (AKEL…LHHH) and 218–288 (PPSA…LVKG). The region spanning 292 to 335 (TKYYRLLSKRGGWVWVQSYATVVHNSRSSRPHCIVSVNYVLTEI) is the PAC domain. Positions 336-667 (EYKELQLSLE…GASVIITNGR (332 aa)) constitute a Single-minded C-terminal domain. 3 disordered regions span residues 356–389 (WRTALSTSQETRKLVKPKNTKMKTKLRTNPYPPQ), 409–428 (ASPPASAAAPPELQPHSESS), and 500–520 (SSSSPAKNPPEPPANTARHSL). Residues 367–386 (RKLVKPKNTKMKTKLRTNPY) carry the Nuclear localization signal motif. Basic residues predominate over residues 369–381 (LVKPKNTKMKTKL). Over residues 409–419 (ASPPASAAAPP) the composition is skewed to low complexity.

Efficient DNA binding requires dimerization with another bHLH protein. Heterodimer of SIM2 and ARNT.

The protein localises to the nucleus. Transcription factor that may be a master gene of CNS development in cooperation with Arnt. It may have pleiotropic effects in the tissues expressed during development. The sequence is that of Single-minded homolog 2 (SIM2) from Homo sapiens (Human).